Here is a 1793-residue protein sequence, read N- to C-terminus: MSFGFGSGGFGQNNNSSTFGGFGSTPTTNTGFGSTGTTAFGSTSNTTGGGLFGGGGGGFGSGNTFGSGFGSKPAFGTPATTSSTSLFGSTTTTAGGTGFGSGGFGSTNTSSPFGGGGTSLFGNKTTTGFGSGTSTFGSNTGGGLFGGGSTTTGFGATNNPGIGTNVGDPPGTAVVPFSPTVEKEVNNPSQSNSYQNILFMDAYKKWSAEELRLADYNQGRKTAAPGGTGAFGSSGFGGFGTTSNTGGFGSNTGGGLFGNTQQNTGGFGTTNTTGSAFGSGGGLFGNKPATGGLFGTSSSQPAQSGGLFGSGTASTFGSSNTGTTSTFGSNNNTGGGLFGSNNTSSKPAFSFGTSNTSTPGFGTATTGSGFGTGTTTNTGGGLFGNTAQNTNTGGGLFGNQQQSGSAFGSGTGFGQQNQSTGTSLFGNTQQKPGGLFGSTTTNTSGGLFGSTNTGTSTFGQTPATQNTGGGLFGSKPAGTGGLFGSTATNQPASTGGLFGNLNTNAQTQQPATGGLFGNLGQNNQAKPSLFGTSTTTGGGLFGNTNAQQQTGSLFGTSTAQQQPQTGLGASLFGSSQQQQQQPQTFSTSITDISAYGATTLFSGLPDDKIQNPGPLATPLSGKAKVKSRSILPMYKLSPANASRLVTTPQKRAYGFSFSAYGSPTSPSSSASSTPGAFGQSILSSSINRGLNKSISASNLRRSLNVEDSILQPGAFSANSSMRLLGGPGSHKKLVINKDMRTDLFSPPNKDKQPQEDGTAARKTVTKRVSFDTSNVETPEKTIESSIPATDDSGYLKPDARSTANGTNGANGAKSSPVAAASPPEMEQVKGKELAVVHEEESPAPAQTDKPRGSQIEPGAYWMSPTADDIRAMNRMQRQRVVGFTVGRENVGSVQFKVPVDLSNINLDDLFGTIVILEPRSATVYPNAAKKPPMGKGLNVPALISLEHSWPRGGPTIKGRRLERHIERLKSIPDTTFESYDPETGVWAFSVEHFTTYGLGDDDDYDDDDYETEPESAVKSTPRPVTSPSISKSSTSPIDPDDTFEFRRSRRALPGAFDDAALSDTDEVANHAQRQGTLSPEPQDADTPLPSREWPEDESMADGLDEYQLEAYEEASQQGSVDEQEDFLPSRFAADNDAPQVPAGIMRARMRAVKKLNAPTKIEVAGGDDWTQILQASVKAPRTMDRATLRALNESGAVWEMKDRGSPPPQATATVSDGMGFATSIDLMKSLFEQAKAPTQPALTTSGKGFVKWPYEQRSKTDTEENLAVPRTNWGPNELLISTQHNEPNLLPVDAADDSATSPSTLARLQQYINLVSSKKQLQRVAGPEFRELAQGDSVWELAALLFDDNGEGVSQFWQQLVSEATDRALSFTAGLEEKAIICLAGNRVDEACRHLLAAGNFRLATLVSTIGKVDNKDIRAQLKDWRESNVLAEFSEPIRAIYELLAGNASVCAGVKNVPIENRVNSFTISQRFGLDWMRSFGLRLWYTSGVIPDVAAAVRSFQEDIEQDREPEPDSALWTLLKAFASREYDWSDTRLGWLLTKAIYTTGKVSFGEDALQKLDKASVTFASALTAASHWVPATFVLLQLSDPASREAAVRDHLGRHAHRIGSPRNLMSPFFTLQKFGVPEAWIWEAKALDYRSRQDSQQEFLALIWAQNYAEANRTFVTRVGPDLVIERNLPRLFAFAQLLFKVKKHLPNWERSAAVYLLYPMAVMQNQGSGKLDRFDNQLIDGLVALHSQTHGDIRQEAAIADMAEELIKCKGAAAASDPRLLQLLPQDVRGKYLRAQVLEAF.

GLFG repeat units lie at residues 50-53 (GLFG), 143-146 (GLFG), 255-258 (GLFG), 282-285 (GLFG), 292-295 (GLFG), 306-309 (GLFG), 336-339 (GLFG), 381-384 (GLFG), and 395-398 (GLFG). 4 disordered regions span residues 404–583 (GSAF…QQPQ), 740–859 (RTDL…EPGA), 999–1043 (GDDD…DDTF), and 1066–1097 (EVAN…PEDE). Positions 417-431 (NQSTGTSLFGNTQQK) are enriched in polar residues. GLFG repeat units follow at residues 434–437 (GLFG), 446–449 (GLFG), 470–473 (GLFG), 481–484 (GLFG), and 496–499 (GLFG). The segment covering 437–459 (GSTTTNTSGGLFGSTNTGTSTFG) has biased composition (low complexity). Over residues 467-483 (TGGGLFGSKPAGTGGLF) the composition is skewed to gly residues. A compositionally biased stretch (polar residues) spans 500–511 (NLNTNAQTQQPA). The stretch at 514–517 (GLFG) is one GLFG 15 repeat. Low complexity predominate over residues 518-535 (NLGQNNQAKPSLFGTSTT). Residues 539-542 (GLFG) form a GLFG 16 repeat. 2 stretches are compositionally biased toward polar residues: residues 546-575 (AQQQ…FGSS) and 801-813 (STAN…NGAK). Residues 814-823 (SSPVAAASPP) are compositionally biased toward low complexity. Residues 826-840 (EQVKGKELAVVHEEE) show a composition bias toward basic and acidic residues. A Peptidase S59 domain is found at 857–993 (PGAYWMSPTA…GVWAFSVEHF (137 aa)). The tract at residues 859–992 (AYWMSPTADD…TGVWAFSVEH (134 aa)) is nucleoporin RNA-binding motif (NRM). The span at 999-1013 (GDDDDYDDDDYETEP) shows a compositional bias: acidic residues. A compositionally biased stretch (low complexity) spans 1025 to 1037 (TSPSISKSSTSPI).

It belongs to the nucleoporin GLFG family. Component of the nuclear pore complex (NPC). NPC constitutes the exclusive means of nucleocytoplasmic transport. NPCs allow the passive diffusion of ions and small molecules and the active, nuclear transport receptor-mediated bidirectional transport of macromolecules such as proteins, RNAs, ribonucleoparticles (RNPs), and ribosomal subunits across the nuclear envelope. Due to its 8-fold rotational symmetry, all subunits are present with 8 copies or multiples thereof. NUP145 is autocatalytically cleaved in NUP145N and NUP145C.

It is found in the nucleus. Its subcellular location is the nuclear pore complex. It localises to the nucleus membrane. Functions as a component of the nuclear pore complex (NPC). NPC components, collectively referred to as nucleoporins (NUPs), can play the role of both NPC structural components and of docking or interaction partners for transiently associated nuclear transport factors. Active directional transport is assured by both, a Phe-Gly (FG) repeat affinity gradient for these transport factors across the NPC and a transport cofactor concentration gradient across the nuclear envelope. NUP145 is autocatalytically cleaved in vivo in 2 polypeptides which assume different functions in the NPC. NUP145N as one of the FG repeat nucleoporins participates in karyopherin interactions and contains part of the autocatalytic cleavage activity. NUP145C as part of the NUP84 complex is involved in nuclear poly(A)+ RNA and tRNA export. In Chaetomium thermophilum (strain DSM 1495 / CBS 144.50 / IMI 039719) (Thermochaetoides thermophila), this protein is Nucleoporin NUP145 (NUP145).